Reading from the N-terminus, the 325-residue chain is All-trans-nonaprenyl-diphosphate synthase (geranyl-diphosphate specific) (325 aa).

Isopentenyl diphosphate contacts are provided by Lys48, Arg51, and His81. Positions 88 and 92 each coordinate Mg(2+). Arg97 serves as a coordination point for an all-trans-polyprenyl diphosphate. Arg98 is a binding site for isopentenyl diphosphate. An all-trans-polyprenyl diphosphate contacts are provided by Lys174, Thr175, Gln211, and Lys228.

This sequence belongs to the FPP/GGPP synthase family. In terms of assembly, homodimer. It depends on Mg(2+) as a cofactor.

It carries out the reaction 7 isopentenyl diphosphate + (2E)-geranyl diphosphate = all-trans-nonaprenyl diphosphate + 7 diphosphate. In terms of biological role, catalyzes the sequential condensation of isopentenyl diphosphate (IPP) with the allylic substrate to give solanesyl diphosphate. Could be important to determine the side chain length of ubiquinone. The polypeptide is All-trans-nonaprenyl-diphosphate synthase (geranyl-diphosphate specific) (sdsA) (Rhodobacter capsulatus (Rhodopseudomonas capsulata)).